The sequence spans 401 residues: Ribosomal RNA large subunit methyltransferase G (401 aa).

It belongs to the methyltransferase superfamily. RlmG family.

It is found in the cytoplasm. It carries out the reaction guanosine(1835) in 23S rRNA + S-adenosyl-L-methionine = N(2)-methylguanosine(1835) in 23S rRNA + S-adenosyl-L-homocysteine + H(+). Its function is as follows. Specifically methylates the guanine in position 1835 (m2G1835) of 23S rRNA. This is Ribosomal RNA large subunit methyltransferase G from Shewanella loihica (strain ATCC BAA-1088 / PV-4).